A 225-amino-acid polypeptide reads, in one-letter code: PKHD-type hydroxylase YbiX (225 aa).

Positions 78–177 (TLSTPLFNRY…RVASFMWIQS (100 aa)) constitute a Fe2OG dioxygenase domain. The Fe cation site is built by H96, D98, and H158. R168 is a binding site for 2-oxoglutarate.

Fe(2+) is required as a cofactor. The cofactor is L-ascorbate.

This is PKHD-type hydroxylase YbiX from Escherichia coli O7:K1 (strain IAI39 / ExPEC).